A 426-amino-acid chain; its full sequence is MLTNGLISLLAIAGLATNAFAGPIRKVSNAGAAGAIADKYIVVLKKGLSDSAVSKHTNRISSFHSNVARDLTGARAHGVGRKFRFSSTGFNGYVGGFDKATLQEILNSPEVDYVEQDTVVTTYAEQTDSTWGLDRISHEDYSAPYTYEYDETAAGAGTTVYVIDTGIRISHDEFQTVNGSSRATWGFNSVDKTDSDGNGHGTHCAGTIAGKTYGVSKKAKVVAVKVLSAGGSGSTAGVVSGMNWVAENATPNFSVASMSLGGSKSTALNAAVDCIFNAGITIVVAAGNENQDAKNVSPASAPNAITVGAIDSSNKIASLSNWGTLIDVFAPGVGVLSSWATSDKETKTISGTSMACPHVAGLAAYYISASEGGADPATITDKITSSRRQWSGHREHPWLPKQDRLQRICLSTHSPKTNHQVTIVAS.

Positions 1 to 21 are cleaved as a signal peptide; sequence MLTNGLISLLAIAGLATNAFA. Residues 22-123 constitute a propeptide that is removed on maturation; it reads GPIRKVSNAG…VEQDTVVTTY (102 aa). An Inhibitor I9 domain is found at 39-122; that stretch reads KYIVVLKKGL…YVEQDTVVTT (84 aa). Residues 130 to 426 form the Peptidase S8 domain; the sequence is TWGLDRISHE…TNHQVTIVAS (297 aa). Asp164 serves as the catalytic Charge relay system. Residue Asn178 is glycosylated (N-linked (GlcNAc...) asparagine). Catalysis depends on His200, which acts as the Charge relay system. N-linked (GlcNAc...) asparagine glycosylation is present at Asn252. Ser353 acts as the Charge relay system in catalysis.

Belongs to the peptidase S8 family.

It localises to the secreted. Its activity is regulated as follows. Inhibited by PMSF, SSI, the peptide Phe-Val and by Phe, but not by EDTA. In terms of biological role, hydrolyzes gelatin, casein, the chromogenic substrate azocoll and the cuticle of the nematode P.redivivus. Immobilizes P.redivivus. The polypeptide is Cuticle-degrading serine protease (Orbilia oligospora (Nematode-trapping fungus)).